The primary structure comprises 416 residues: Fusaric acid cluster transcription factor FUB10 (416 aa).

A DNA-binding region (zn(2)-C6 fungal-type) is located at residues 16 to 47 (CDRCRAQKLRCHRDSGHSTDACLRCLKSGIEC). The tract at residues 50-92 (SKARPTGRPPSRQVQPTVSVEQGDTSSSSHTTDSSPSAGGTDI) is disordered. A compositionally biased stretch (polar residues) spans 61–73 (RQVQPTVSVEQGD). The segment covering 74-86 (TSSSSHTTDSSPS) has biased composition (low complexity).

It localises to the nucleus. Functionally, transcription factor that regulates the expression of the gene cluster that mediates the biosynthesis of fusaric acid, a mycotoxin with low to moderate toxicity to animals and humans, but with high phytotoxic properties. This chain is Fusaric acid cluster transcription factor FUB10, found in Fusarium oxysporum f. sp. lycopersici (strain 4287 / CBS 123668 / FGSC 9935 / NRRL 34936) (Fusarium vascular wilt of tomato).